A 561-amino-acid polypeptide reads, in one-letter code: Arf-GAP domain and FG repeat-containing protein 1 (561 aa).

Residues 11 to 135 (EKHLKMLRDM…WYVPPEQAKV (125 aa)) enclose the Arf-GAP domain. The C4-type zinc-finger motif lies at 29–52 (CFDCDQRGPTYVNMTVGSFVCTSC). At Ser167 the chain carries Phosphoserine. Positions 171–193 (LHLNKGTPTQSPVVGRSQGQQQE) are disordered. The segment covering 176–191 (GTPTQSPVVGRSQGQQ) has biased composition (polar residues). Position 177 is a phosphothreonine (Thr177). Residues Ser181 and Ser362 each carry the phosphoserine modification. O-linked (GlcNAc) serine glycosylation is present at Ser367. The tract at residues 409–451 (PVGASPQTQPASSGPAPFGATPSTNPFVAATGPSAASSTNPFQ) is disordered. Residues 442–451 (SAASSTNPFQ) show a composition bias toward polar residues.

Interacts with EPS15R and EPS15. Interacts with FCHO1. O-glycosylated.

It is found in the nucleus. Its subcellular location is the cytoplasmic vesicle. Its function is as follows. Required for vesicle docking or fusion during acrosome biogenesis. May play a role in RNA trafficking or localization. This is Arf-GAP domain and FG repeat-containing protein 1 (Agfg1) from Rattus norvegicus (Rat).